Here is a 67-residue protein sequence, read N- to C-terminus: DNA gyrase inhibitor YacG (67 aa).

Residues C9, C12, C28, and C32 each coordinate Zn(2+). Positions 48 to 67 (PVSPDAEDELFSEELPPRAH) are disordered.

The protein belongs to the DNA gyrase inhibitor YacG family. Interacts with GyrB. It depends on Zn(2+) as a cofactor.

Its function is as follows. Inhibits all the catalytic activities of DNA gyrase by preventing its interaction with DNA. Acts by binding directly to the C-terminal domain of GyrB, which probably disrupts DNA binding by the gyrase. The polypeptide is DNA gyrase inhibitor YacG (Pseudomonas fluorescens (strain ATCC BAA-477 / NRRL B-23932 / Pf-5)).